The primary structure comprises 200 residues: Eukaryotic translation initiation factor isoform 4E (200 aa).

Residues 44 to 49 (QGVAWG), Lys-76, and 94 to 95 (WE) each bind mRNA. A disulfide bridge links Cys-99 with Cys-138. MRNA contacts are provided by residues 145–150 (RRSQDK) and 189–192 (KRER).

It belongs to the eukaryotic initiation factor 4E family. In terms of assembly, EIF4F is a multi-subunit complex, the composition of which varies with external and internal environmental conditions. It is composed of at least EIF4A, EIF4E and EIF4G. EIF4E is also known to interact with other partners. In higher plants two isoforms of EIF4F have been identified, named isoform EIF4F and isoform EIF(iso)4F. Isoform EIF4F has subunits p220 and p26, whereas isoform EIF(iso)4F has subunits p82 and p28. (Microbial infection) Interacts with viral genome-linked protein (VPg); this interaction is possible in susceptible hosts but impaired in resistant plants. According to the redox status, the Cys-99-Cys-138 disulfide bridge may have a role in regulating protein function by affecting its ability to bind capped mRNA. Mostly expressed in roots and leaves, and, to a lower extent, in stems, flowers and immature green fruits.

Its subcellular location is the cytoplasm. It is found in the nucleus. Component of the protein complex eIF4F, which is involved in the recognition of the mRNA cap, ATP-dependent unwinding of 5'-terminal secondary structure and recruitment of mRNA to the ribosome. Recognizes and binds the 7-methylguanosine-containing mRNA cap during an early step in the initiation of protein synthesis and facilitates ribosome binding by inducing the unwinding of the mRNAs secondary structures. Key component of recessive resistance to potyviruses. Functionally, (Microbial infection) Susceptibility host factor required for viral infection by recruiting viral RNAs to the host ribosomal complex via an interaction with viral genome-linked protein (VPg). In Solanum lycopersicum (Tomato), this protein is Eukaryotic translation initiation factor isoform 4E.